A 204-amino-acid chain; its full sequence is UPF0637 protein lin1053 (204 aa).

Belongs to the UPF0637 family.

The sequence is that of UPF0637 protein lin1053 from Listeria innocua serovar 6a (strain ATCC BAA-680 / CLIP 11262).